The chain runs to 101 residues: Small ribosomal subunit protein uS14 (101 aa).

The protein belongs to the universal ribosomal protein uS14 family. Part of the 30S ribosomal subunit. Contacts proteins S3 and S10.

In terms of biological role, binds 16S rRNA, required for the assembly of 30S particles and may also be responsible for determining the conformation of the 16S rRNA at the A site. The protein is Small ribosomal subunit protein uS14 of Francisella philomiragia subsp. philomiragia (strain ATCC 25017 / CCUG 19701 / FSC 153 / O#319-036).